Here is a 330-residue protein sequence, read N- to C-terminus: Glucosyltransferase 3 (330 aa).

A UDP-binding site is contributed by Thr-16. Positions 106–111 are substrate protein-binding loop; it reads MFSGNF. UDP is bound by residues Arg-179, 211-214, and 244-249; these read YRPD and SYKLGS.

The protein belongs to the Gtf3 glucosyltransferase family. Homotetramer; a dimer of dimers. The cofactor is In vitro glycosyltransferase activity is metal-independent..

It participates in protein modification; protein glycosylation. Required for polymorphic O-glycosylation of the serine-rich repeat protein Fap1. Catalyzes the second step in glycosylation of the serine-rich repeat protein in this bacteria. Transfers glucose from UDP-glucose to the terminal GlcNAc moiety of 3-O-(N-acetyl-alpha-D-glucosaminyl)-L-seryl-[protein] which results from the first glycosylation step of Fap1; does not use other sugar nucleotides as substrates. In Streptococcus parasanguinis, this protein is Glucosyltransferase 3.